We begin with the raw amino-acid sequence, 567 residues long: Glucose-6-phosphate isomerase, cytosolic A (567 aa).

D-glucose 6-phosphate contacts are provided by residues 156–157, 212–217, Gln356, Glu360, His391, and Lys516; these read GS and SKTFTT. Glu360 (proton donor) is an active-site residue. Residues His391 and Lys516 contribute to the active site.

The protein belongs to the GPI family. Homodimer.

The protein resides in the cytoplasm. It carries out the reaction alpha-D-glucose 6-phosphate = beta-D-fructose 6-phosphate. The protein operates within carbohydrate degradation; glycolysis; D-glyceraldehyde 3-phosphate and glycerone phosphate from D-glucose: step 2/4. Functionally, catalyzes the conversion of glucose-6-phosphate to fructose-6-phosphate, the second step in glycolysis, and the reverse reaction during gluconeogenesis. The sequence is that of Glucose-6-phosphate isomerase, cytosolic A from Oryza sativa subsp. japonica (Rice).